Consider the following 140-residue polypeptide: Large ribosomal subunit protein uL16 (140 aa).

It belongs to the universal ribosomal protein uL16 family. In terms of assembly, part of the 50S ribosomal subunit.

Functionally, binds 23S rRNA and is also seen to make contacts with the A and possibly P site tRNAs. This chain is Large ribosomal subunit protein uL16, found in Geotalea uraniireducens (strain Rf4) (Geobacter uraniireducens).